Consider the following 141-residue polypeptide: Hemoglobin subunit alpha-D (141 aa).

The 141-residue stretch at 1 to 141 folds into the Globin domain; that stretch reads MLNHDEKQLI…VSAVLAEKYR (141 aa). Heme b contacts are provided by His58 and His87.

This sequence belongs to the globin family. In terms of assembly, heterotetramer of two alpha-D chains and two beta chains. In terms of tissue distribution, red blood cells.

Involved in oxygen transport from the lung to the various peripheral tissues. The sequence is that of Hemoglobin subunit alpha-D (HBAD) from Chrysemys picta bellii (Western painted turtle).